The primary structure comprises 291 residues: N-acetylmannosamine kinase (291 aa).

ATP is bound by residues 5–12 and 132–139; these read AIDIGGTK and GVGGGVVS. The Zn(2+) site is built by His-156, Cys-166, Cys-168, and Cys-173.

Belongs to the ROK (NagC/XylR) family. NanK subfamily. Homodimer.

The enzyme catalyses an N-acyl-D-mannosamine + ATP = an N-acyl-D-mannosamine 6-phosphate + ADP + H(+). The protein operates within amino-sugar metabolism; N-acetylneuraminate degradation; D-fructose 6-phosphate from N-acetylneuraminate: step 2/5. Functionally, catalyzes the phosphorylation of N-acetylmannosamine (ManNAc) to ManNAc-6-P. This Escherichia coli (strain 55989 / EAEC) protein is N-acetylmannosamine kinase.